A 111-amino-acid chain; its full sequence is Ferredoxin, 2Fe-2S (111 aa).

Cysteine 10, cysteine 23, cysteine 56, and cysteine 60 together coordinate [2Fe-2S] cluster.

Homodimer in solution. Requires [2Fe-2S] cluster as cofactor.

Ferredoxins are iron-sulfur proteins that transfer electrons in a wide variety of metabolic reactions. The polypeptide is Ferredoxin, 2Fe-2S (fdx4) (Aquifex aeolicus (strain VF5)).